The following is a 315-amino-acid chain: Calumenin-A (315 aa).

The first 19 residues, 1–19 (MEIRPLLMCFALCVVYATS), serve as a signal peptide directing secretion. 6 consecutive EF-hand domains span residues 68–103 (ESKN…AQKK), 104–139 (YIYD…TYLD), 151–186 (QMMA…EEYE), 188–223 (MKDI…HEDE), 229–264 (WVAT…ADYD), and 265–300 (HAEA…FVGS). Ca(2+) contacts are provided by Asp-81, Asp-83, Asp-85, Glu-92, Asp-117, Asn-119, Asp-121, Met-123, and Glu-128. Asn-131 is a glycosylation site (N-linked (GlcNAc...) asparagine). Ca(2+)-binding residues include Asp-164, Asn-166, Asp-168, Glu-175, Asp-201, Asn-203, Asp-205, Glu-212, Asp-242, Asn-244, Asp-246, Lys-248, Glu-253, Asp-278, Asn-280, Asp-282, Lys-284, and Glu-289. The short motif at 312–315 (HDEF) is the Prevents secretion from ER element.

It belongs to the CREC family. Interacts with ggcx.

The protein localises to the endoplasmic reticulum membrane. The protein resides in the golgi apparatus. It localises to the secreted. It is found in the melanosome. Its subcellular location is the sarcoplasmic reticulum lumen. Functionally, involved in regulation of vitamin K-dependent carboxylation of multiple N-terminal glutamate residues. Seems to inhibit gamma-carboxylase ggcx. Binds 7 calcium ions with a low affinity. This is Calumenin-A (calua) from Danio rerio (Zebrafish).